The following is a 1444-amino-acid chain: Rho GTPase-activating protein 31 (1444 aa).

The region spanning 21–216 is the Rho-GAP domain; the sequence is CDLTEYLESS…FILNHVDQIF (196 aa). Ser-272 is modified (phosphoserine). Thr-286 is subject to Phosphothreonine. A phosphoserine mark is found at Ser-346, Ser-349, and Ser-387. Residues 398 to 427 form a disordered region; the sequence is WGQEGMPPGAEGGFDVSSDRSHLQGAQARP. The residue at position 476 (Ser-476) is a Phosphoserine. The segment at 504-631 is disordered; it reads TNSTPCRTPP…ESSTLQESPR (128 aa). A compositionally biased stretch (low complexity) spans 515–534; sequence ELQSLSSLEEFSFHGSESGG. The span at 600–619 shows a compositional bias: basic and acidic residues; that stretch reads NELEKRPNPEKVVEEGREAG. Thr-679 carries the post-translational modification Phosphothreonine. 2 disordered regions span residues 688–893 and 906–1108; these read SSLG…EDDT and EPWE…SSLN. Residues Ser-701 and Ser-712 each carry the phosphoserine modification. Positions 722-734 are enriched in polar residues; it reads PANQSTQGASTAA. A compositionally biased stretch (basic and acidic residues) spans 735–745; it reads SREKPEPEQGL. The segment covering 777–790 has biased composition (pro residues); that stretch reads LSPPLPPAPPPPTP. Residue Ser-778 is modified to Phosphoserine. Thr-789 is modified (phosphothreonine). The segment covering 803 to 817 has biased composition (basic and acidic residues); sequence GPEREDSSRKLRTDL. Polar residues predominate over residues 822–834; that stretch reads LKSQDSPEISSLC. Positions 839-848 are enriched in basic and acidic residues; the sequence is ATPRHSDKQN. A compositionally biased stretch (polar residues) spans 960 to 977; that stretch reads TVKSQWTLEVPSSSSCAN. Ser-974 is modified (phosphoserine). The span at 992 to 1008 shows a compositional bias: basic and acidic residues; the sequence is PRREITGWDEKALRSFR. Residues 1028–1038 are compositionally biased toward polar residues; it reads VQPNPAETSPI. A compositionally biased stretch (low complexity) spans 1064-1075; sequence GPESSKESSPSV. 3 positions are modified to phosphoserine: Ser-1105, Ser-1106, and Ser-1178. Composition is skewed to polar residues over residues 1211-1224 and 1234-1245; these read QIPQ…SGEN and EGPSSTSGTTQK. The disordered stretch occupies residues 1211–1346; that stretch reads QIPQPLPSQS…HRSRPGRPQS (136 aa). A compositionally biased stretch (basic and acidic residues) spans 1246–1265; the sequence is PAKDDSPSSLESSKEEKPKQ. Composition is skewed to polar residues over residues 1292–1303 and 1314–1323; these read PGSSNLLSTQDA and TEPSGDNLLS.

Interacts with ITSN1, which inhibits GAP activity. Interacts with PARVA. Interacts with GTP-loaded RHOU. Post-translationally, phosphorylation on Thr-789 reduces GAP activity.

The protein resides in the cell projection. It is found in the lamellipodium. The protein localises to the cell junction. It localises to the focal adhesion. Functions as a GTPase-activating protein (GAP) for RAC1 and CDC42. Required for cell spreading, polarized lamellipodia formation and cell migration. In Homo sapiens (Human), this protein is Rho GTPase-activating protein 31 (ARHGAP31).